The primary structure comprises 356 residues: 3'-5' exonuclease (356 aa).

The tract at residues 1 to 120 (MDKYLIKMPT…TPSPEKEKPE (120 aa)) is disordered. Basic and acidic residues-rich tracts occupy residues 29–56 (TIDK…ENTP) and 71–85 (KNQD…IKNE). Low complexity predominate over residues 99 to 113 (LTRSTRSMAEEGTPS). Residues Ser105 and Ser113 each carry the phosphoserine modification. In terms of domain architecture, 3'-5' exonuclease spans 155 to 316 (TTLDVVPMAF…GQVIYRDLEQ (162 aa)). Mg(2+)-binding residues include Asp165, Glu167, and Asp303.

Belongs to the WRNexo family.

It is found in the nucleus. Functionally, has exonuclease activity on both single-stranded and duplex templates bearing overhangs, but not blunt ended duplex DNA, and cleaves in a 3'-5' direction. Essential for the formation of DNA replication focal centers. Has an important role in maintaining genome stability. The sequence is that of 3'-5' exonuclease from Drosophila willistoni (Fruit fly).